The following is a 179-amino-acid chain: Large ribosomal subunit protein uL5 (179 aa).

The protein belongs to the universal ribosomal protein uL5 family. As to quaternary structure, part of the 50S ribosomal subunit; part of the 5S rRNA/L5/L18/L25 subcomplex. Contacts the 5S rRNA and the P site tRNA. Forms a bridge to the 30S subunit in the 70S ribosome.

This is one of the proteins that bind and probably mediate the attachment of the 5S RNA into the large ribosomal subunit, where it forms part of the central protuberance. In the 70S ribosome it contacts protein S13 of the 30S subunit (bridge B1b), connecting the 2 subunits; this bridge is implicated in subunit movement. Contacts the P site tRNA; the 5S rRNA and some of its associated proteins might help stabilize positioning of ribosome-bound tRNAs. This is Large ribosomal subunit protein uL5 from Nitratidesulfovibrio vulgaris (strain ATCC 29579 / DSM 644 / CCUG 34227 / NCIMB 8303 / VKM B-1760 / Hildenborough) (Desulfovibrio vulgaris).